The following is a 116-amino-acid chain: uncharacterized protein (116 aa).

Residues 5 to 23 (LLAVETWYMLILSFRFLFF) form a helical membrane-spanning segment.

The protein resides in the membrane. This is an uncharacterized protein from Saccharomyces cerevisiae (strain ATCC 204508 / S288c) (Baker's yeast).